Here is a 41-residue protein sequence, read N- to C-terminus: MKVVSSLKSLKNRDKSCQVVKRRGKIFVINKKNKKFKARQG.

The protein belongs to the bacterial ribosomal protein bL36 family.

In Orientia tsutsugamushi (strain Boryong) (Rickettsia tsutsugamushi), this protein is Large ribosomal subunit protein bL36.